Here is a 301-residue protein sequence, read N- to C-terminus: UDP-N-acetylenolpyruvoylglucosamine reductase 1 (301 aa).

Residues 29-196 form the FAD-binding PCMH-type domain; sequence KIGGPADILI…LEAEFQLQIG (168 aa). Arg-174 is an active-site residue. Residue Ser-225 is the Proton donor of the active site. Glu-295 is a catalytic residue.

The protein belongs to the MurB family. FAD serves as cofactor.

It localises to the cytoplasm. It catalyses the reaction UDP-N-acetyl-alpha-D-muramate + NADP(+) = UDP-N-acetyl-3-O-(1-carboxyvinyl)-alpha-D-glucosamine + NADPH + H(+). It participates in cell wall biogenesis; peptidoglycan biosynthesis. Functionally, cell wall formation. In Bacillus cereus (strain ZK / E33L), this protein is UDP-N-acetylenolpyruvoylglucosamine reductase 1.